We begin with the raw amino-acid sequence, 589 residues long: Arginine--tRNA ligase (589 aa).

The 'HIGH' region signature appears at 131–141 (ANPTGPLHVGH).

This sequence belongs to the class-I aminoacyl-tRNA synthetase family. In terms of assembly, monomer.

It is found in the cytoplasm. The catalysed reaction is tRNA(Arg) + L-arginine + ATP = L-arginyl-tRNA(Arg) + AMP + diphosphate. The protein is Arginine--tRNA ligase of Legionella pneumophila subsp. pneumophila (strain Philadelphia 1 / ATCC 33152 / DSM 7513).